A 261-amino-acid chain; its full sequence is MTLQAQDLSVDRGAKRILTQVSLTLEPGRMLGLLGANGAGKSTLLACLSGELEPVCGHIEINGKPLRSLASAKQARLRAVLPQKPSLSFDLGVREVVGMGAYPYAELSPADVDALCEKALRQAGVSHLAGRRYLELSGGEQQRVQFARVLMQCQAAPAGQPRYLMLDEPISNLDPRHQIDVLRTAHDLAREAGVGVLVIVHDVNLSARWCDRLLLLAQGSVVADGAPAEVLTPANLRRVYGVEADVLPHPREAGTLLVLMR.

The ABC transporter domain maps to 3–243 (LQAQDLSVDR…ANLRRVYGVE (241 aa)). 35-42 (GANGAGKS) is a binding site for ATP.

It belongs to the ABC transporter superfamily. Heme (hemin) importer (TC 3.A.1.14.5) family. As to quaternary structure, the complex is composed of two ATP-binding proteins (HmuV), two transmembrane proteins (HmuU) and a solute-binding protein (HmuT).

Its subcellular location is the cell inner membrane. Part of the ABC transporter complex HmuTUV involved in hemin import. Responsible for energy coupling to the transport system. The protein is Hemin import ATP-binding protein HmuV of Bordetella avium (strain 197N).